The primary structure comprises 821 residues: Palmitoyltransferase AKR1 (821 aa).

Residues 1–118 (MVDKDANNEL…KDTASRKSMD (118 aa)) form a disordered region. Residues 1 to 400 (MVDKDANNEL…TIYLNPKIGK (400 aa)) are Cytoplasmic-facing. Over residues 93–117 (IQDESVNDKTSEPDENKDTASRKSM) the composition is skewed to basic and acidic residues. ANK repeat units follow at residues 142-172 (PSLH…KAND), 176-205 (DGIT…SKAD), 213-243 (LKAS…DPTL), 247-277 (QSYN…STST), 289-318 (CDRT…DVSK), and 322-351 (NLFI…NIFA). The helical transmembrane segment at 401–421 (LVTFFTPYIILPIMFQVCSFY) threads the bilayer. N422 is a topological domain (lumenal). The helical transmembrane segment at 423-443 (GFVIPKLFFSVVLFAGSIYIL) threads the bilayer. Over 444–463 (QKLVIPTYLAEEKAIPKSPL) the chain is Cytoplasmic. Residues 464–484 (LAGIFSGTAFWCIVTWAFNII) form a helical membrane-spanning segment. Topologically, residues 485 to 494 (PTLLFKKFIS) are lumenal. Residues 495–515 (NLVLSAFIYLFVWSFFKAMFI) form a helical membrane-spanning segment. Over 516-589 (NPGYVPVPSD…YNDIGVRNHK (74 aa)) the chain is Cytoplasmic. The DHHC domain maps to 546 to 596 (NFCVNTFVRKPLRSKYSRFNKKLIARFDHYCPWVYNDIGVRNHKLFVVFVY). C576 functions as the S-palmitoyl cysteine intermediate in the catalytic mechanism. The helical transmembrane segment at 590-610 (LFVVFVYSLNLAVLLFTHLSI) threads the bilayer. The Lumenal portion of the chain corresponds to 611 to 650 (KLFKNTEKMSGYDSDDESQKCWLLSDELCVGYKSHHFQFN). A helical transmembrane segment spans residues 651–671 (LMLWCLIQYIWIAFLCLVQTF). Residues 672–821 (QILKGLTTWE…YPPKLADVDA (150 aa)) are Cytoplasmic-facing.

This sequence belongs to the DHHC palmitoyltransferase family. AKR/ZDHHC17 subfamily.

The protein resides in the early endosome membrane. The protein localises to the golgi apparatus membrane. The catalysed reaction is L-cysteinyl-[protein] + hexadecanoyl-CoA = S-hexadecanoyl-L-cysteinyl-[protein] + CoA. Palmitoyltransferase specific for casein kinase 1. The polypeptide is Palmitoyltransferase AKR1 (AKR1) (Debaryomyces hansenii (strain ATCC 36239 / CBS 767 / BCRC 21394 / JCM 1990 / NBRC 0083 / IGC 2968) (Yeast)).